Reading from the N-terminus, the 267-residue chain is Coiled-coil domain-containing protein 172 (267 aa).

Coiled coils occupy residues 24–97 (MREV…CEAI) and 128–191 (LMKE…EETE).

Belongs to the CCDC172 family. May interact with TEKT2.

The protein resides in the cytoplasm. The protein localises to the cell projection. It is found in the cilium. This is Coiled-coil domain-containing protein 172 (Ccdc172) from Mus musculus (Mouse).